A 218-amino-acid chain; its full sequence is Cytochrome b6 (218 aa).

A helical transmembrane segment spans residues 35–55 (IFYCLGGITLVCFLIQFATGF). Position 38 (Cys-38) interacts with heme c. Residues His-89 and His-103 each coordinate heme b. The next 3 membrane-spanning stretches (helical) occupy residues 93 to 113 (ASMMVLMLILHVFRVYLTGGF), 119 to 139 (LTWVTGVVMAVITVAFGVTGY), and 189 to 209 (LHTFVLPWSLAVFMLMHFLMI). Residues His-190 and His-205 each coordinate heme b.

It belongs to the cytochrome b family. PetB subfamily. As to quaternary structure, the 4 large subunits of the cytochrome b6-f complex are cytochrome b6, subunit IV (17 kDa polypeptide, PetD), cytochrome f and the Rieske protein, while the 4 small subunits are PetG, PetL, PetM and PetN. The complex functions as a dimer. Heme b is required as a cofactor. Heme c serves as cofactor.

The protein resides in the cellular thylakoid membrane. Functionally, component of the cytochrome b6-f complex, which mediates electron transfer between photosystem II (PSII) and photosystem I (PSI), cyclic electron flow around PSI, and state transitions. In Prochlorococcus marinus (strain MIT 9215), this protein is Cytochrome b6.